The following is a 110-amino-acid chain: Inner membrane protein YgiZ (110 aa).

At 1–8 (MLKQKIKT) the chain is on the cytoplasmic side. Residues 9–29 (IFEALLYIMLTYWLIDSFFAF) traverse the membrane as a helical segment. The Periplasmic segment spans residues 30–53 (NKYDWMLESGGNICSIPSVSGEDR). The chain crosses the membrane as a helical span at residues 54–74 (ILQAMIAAFFLLTPLIILILR). Topologically, residues 75-83 (KLFMREMFE) are cytoplasmic. The helical transmembrane segment at 84-104 (FWVYVFSLGICLVCGWWLFWG) threads the bilayer. Topologically, residues 105 to 110 (RFIFCY) are periplasmic.

It is found in the cell inner membrane. In Escherichia coli (strain K12), this protein is Inner membrane protein YgiZ (ygiZ).